Consider the following 129-residue polypeptide: Small ribosomal subunit protein uS11 (129 aa).

Belongs to the universal ribosomal protein uS11 family. Part of the 30S ribosomal subunit. Interacts with proteins S7 and S18. Binds to IF-3.

Its function is as follows. Located on the platform of the 30S subunit, it bridges several disparate RNA helices of the 16S rRNA. Forms part of the Shine-Dalgarno cleft in the 70S ribosome. This is Small ribosomal subunit protein uS11 from Geobacillus stearothermophilus (Bacillus stearothermophilus).